A 184-amino-acid polypeptide reads, in one-letter code: Probable RNA 2'-phosphotransferase (184 aa).

This sequence belongs to the KptA/TPT1 family.

Functionally, removes the 2'-phosphate from RNA via an intermediate in which the phosphate is ADP-ribosylated by NAD followed by a presumed transesterification to release the RNA and generate ADP-ribose 1''-2''-cyclic phosphate (APPR&gt;P). May function as an ADP-ribosylase. The chain is Probable RNA 2'-phosphotransferase from Escherichia coli (strain 55989 / EAEC).